The following is a 310-amino-acid chain: ADP-L-glycero-D-manno-heptose-6-epimerase (310 aa).

NADP(+)-binding positions include 10-11 (FI), 31-32 (DN), K38, K53, 75-79 (EGACS), and N92. The active-site Proton acceptor is the Y140. Position 144 (K144) interacts with NADP(+). Residue N169 participates in substrate binding. The NADP(+) site is built by V170 and K178. Catalysis depends on K178, which acts as the Proton acceptor. Substrate is bound by residues S180, H187, 201-204 (FEGS), R209, and Y272.

The protein belongs to the NAD(P)-dependent epimerase/dehydratase family. HldD subfamily. Homopentamer. NADP(+) is required as a cofactor.

It catalyses the reaction ADP-D-glycero-beta-D-manno-heptose = ADP-L-glycero-beta-D-manno-heptose. The protein operates within nucleotide-sugar biosynthesis; ADP-L-glycero-beta-D-manno-heptose biosynthesis; ADP-L-glycero-beta-D-manno-heptose from D-glycero-beta-D-manno-heptose 7-phosphate: step 4/4. Its function is as follows. Catalyzes the interconversion between ADP-D-glycero-beta-D-manno-heptose and ADP-L-glycero-beta-D-manno-heptose via an epimerization at carbon 6 of the heptose. This chain is ADP-L-glycero-D-manno-heptose-6-epimerase, found in Salmonella newport (strain SL254).